A 436-amino-acid chain; its full sequence is Serine/threonine-protein kinase 40 (436 aa).

A compositionally biased stretch (basic and acidic residues) spans 1 to 10 (MKRRASDRGA). The disordered stretch occupies residues 1–25 (MKRRASDRGAGETSARAKALGSGIS). The region spanning 35 to 332 (FILGPRLGNS…DVLEALSSII (298 aa)) is the Protein kinase domain. ATP-binding positions include 41 to 49 (LGNSPVPSI) and Lys-66. The Proton acceptor role is filled by Asp-197. The disordered stretch occupies residues 396 to 417 (RSWVPKRQSGAGVPPVRRLGHD).

The protein belongs to the protein kinase superfamily. CAMK Ser/Thr protein kinase family.

The protein localises to the nucleus. Its subcellular location is the cytoplasm. It carries out the reaction L-seryl-[protein] + ATP = O-phospho-L-seryl-[protein] + ADP + H(+). The catalysed reaction is L-threonyl-[protein] + ATP = O-phospho-L-threonyl-[protein] + ADP + H(+). Its function is as follows. May be a negative regulator of NF-kappa-B and p53-mediated gene transcription. The polypeptide is Serine/threonine-protein kinase 40 (STK40) (Bos taurus (Bovine)).